A 317-amino-acid chain; its full sequence is Protease 7 (317 aa).

The N-terminal stretch at 1 to 20 is a signal peptide; that stretch reads MRAKLLGIVLTTPIAISSFA. Over 21 to 31 the chain is Periplasmic; it reads STETLSFTPDN. A beta stranded membrane pass occupies residues 32-41; the sequence is INADISLGTL. Topologically, residues 42-69 are extracellular; it reads SGKTKERVYLAEEGGRKVSQLDWKFNNA. The chain crosses the membrane as a beta stranded span at residues 70-78; that stretch reads AIIKGAINW. Residues 79-83 lie on the Periplasmic side of the membrane; sequence DLMPQ. Residues 84-92 traverse the membrane as a beta stranded segment; the sequence is ISIGAAGWT. Topologically, residues 93-130 are extracellular; it reads TLGSRGGNMVDQDWMDSSNPGTWTDESRHPDTQLNYAN. Residues Asp103 and Asp105 contribute to the active site. The beta stranded transmembrane segment at 131–140 threads the bilayer; that stretch reads EFDLNIKGWL. The Periplasmic portion of the chain corresponds to 141 to 145; sequence LNEPN. Residues 146–156 traverse the membrane as a beta stranded segment; the sequence is YRLGLMAGYQE. The Extracellular portion of the chain corresponds to 157-197; it reads SRYSFTARGGSYIYSSEEGFRDDIGSFPNGERAIGYKQRFK. A beta stranded transmembrane segment spans residues 198 to 209; sequence MPYIGLTGSYRY. Topologically, residues 210 to 211 are periplasmic; that stretch reads ED. A beta stranded transmembrane segment spans residues 212–221; sequence FELGGTFKYS. Residues 222–250 are Extracellular-facing; that stretch reads GWVEASDNDEHYDPGKRITYRSKVKDQNY. Residues Asp230 and His232 contribute to the active site. The chain crosses the membrane as a beta stranded span at residues 251-261; sequence YSVSVNAGYYV. The Periplasmic segment spans residues 262–264; the sequence is TPN. The chain crosses the membrane as a beta stranded span at residues 265–274; sequence AKVYVEGTWN. Residues 275 to 306 lie on the Extracellular side of the membrane; sequence RVTNKKGNTSLYDHNDNTSDYSKNGAGIENYN. A beta stranded transmembrane segment spans residues 307-316; it reads FITTAGLKYT. Position 317 (Phe317) is a topological domain, periplasmic.

It belongs to the peptidase A26 family. Homopentamer.

It localises to the cell outer membrane. It catalyses the reaction Has a virtual requirement for Arg in the P1 position and a slightly less stringent preference for this residue in the P1' position, which can also contain Lys, Gly or Val.. Its activity is regulated as follows. Inhibited by zinc. Its function is as follows. Protease that can cleave T7 RNA polymerase, ferric enterobactin receptor protein (FEP), antimicrobial peptide protamine and other proteins. This protease has a specificity for paired basic residues. This is Protease 7 (ompT) from Escherichia coli O157:H7.